A 364-amino-acid chain; its full sequence is Anthranilate phosphoribosyltransferase (364 aa).

A compositionally biased stretch (polar residues) spans 1–10; it reads MTSGPSQPFP. The segment at 1 to 22 is disordered; it reads MTSGPSQPFPSASGPDDGPSWP. 5-phospho-alpha-D-ribose 1-diphosphate contacts are provided by residues G101, 104-105, T109, 111-114, 129-137, and G141; these read GD, NLST, and KHGNRAASS. G101 contacts anthranilate. S113 lines the Mg(2+) pocket. N132 contributes to the anthranilate binding site. R187 lines the anthranilate pocket. Mg(2+) contacts are provided by D245 and E246.

This sequence belongs to the anthranilate phosphoribosyltransferase family. As to quaternary structure, homodimer. It depends on Mg(2+) as a cofactor.

It carries out the reaction N-(5-phospho-beta-D-ribosyl)anthranilate + diphosphate = 5-phospho-alpha-D-ribose 1-diphosphate + anthranilate. It functions in the pathway amino-acid biosynthesis; L-tryptophan biosynthesis; L-tryptophan from chorismate: step 2/5. Functionally, catalyzes the transfer of the phosphoribosyl group of 5-phosphorylribose-1-pyrophosphate (PRPP) to anthranilate to yield N-(5'-phosphoribosyl)-anthranilate (PRA). The protein is Anthranilate phosphoribosyltransferase of Mycolicibacterium smegmatis (strain ATCC 700084 / mc(2)155) (Mycobacterium smegmatis).